Here is a 702-residue protein sequence, read N- to C-terminus: Methionine--tRNA ligase (702 aa).

Residues 14–24 (PYANGPVHLGH) carry the 'HIGH' region motif. Zn(2+) contacts are provided by Cys-146, Cys-149, Cys-159, and Cys-162. The 'KMSKS' region motif lies at 344 to 348 (KFSKS). Position 347 (Lys-347) interacts with ATP. The 102-residue stretch at 601 to 702 (EFLKVDLRVA…GKEINGKKIQ (102 aa)) folds into the tRNA-binding domain.

Belongs to the class-I aminoacyl-tRNA synthetase family. MetG type 1 subfamily. In terms of assembly, homodimer. The cofactor is Zn(2+).

Its subcellular location is the cytoplasm. The catalysed reaction is tRNA(Met) + L-methionine + ATP = L-methionyl-tRNA(Met) + AMP + diphosphate. Is required not only for elongation of protein synthesis but also for the initiation of all mRNA translation through initiator tRNA(fMet) aminoacylation. This is Methionine--tRNA ligase from Chlorobium phaeobacteroides (strain DSM 266 / SMG 266 / 2430).